A 56-amino-acid chain; its full sequence is MARKDKKTLPASGAGIVRYFNDDTAGVKLSPKQVVIGTIIVALICIALRFTTSVGY.

Residues 1–30 lie on the Cytoplasmic side of the membrane; the sequence is MARKDKKTLPASGAGIVRYFNDDTAGVKLS. A helical membrane pass occupies residues 31–52; that stretch reads PKQVVIGTIIVALICIALRFTT. The Extracellular portion of the chain corresponds to 53–56; it reads SVGY.

The protein belongs to the SEC61-beta family. In terms of assembly, component of the protein translocase complex. Heterotrimer consisting of alpha (SecY), beta (SecG) and gamma (SecE) subunits. Can form oligomers of the heterotrimer.

It localises to the cell membrane. Involved in protein export. The function of the beta subunit is unknown, but it may be involved in stabilization of the trimeric complex. In Methanosphaera stadtmanae (strain ATCC 43021 / DSM 3091 / JCM 11832 / MCB-3), this protein is Preprotein translocase subunit SecG.